A 480-amino-acid polypeptide reads, in one-letter code: MNFETVIGLEVHVELNTNSKIFSPTSAHFGNDQNANTNVIDWSFPGVLPVLNKGVVDAGIKAALALNMDIHKKMHFDRKNYFYPDNPKAYQISQFDEPIGYNGWIEVELEDGTTKKIGIERAHLEEDAGKNTHGTDGYSYVDLNRQGVPLIEIVSEADMRSPEEAYAYLTALKEVIQYAGISDVKMEEGSMRVDANISLRPYGQEKFGTKTELKNLNSFSNVRKGLEYEVQRQAEILRSGGQIRQETRRYDEANKATILMRVKEGAADYRYFPEPDLPLFEISDEWIEEMRTELPEFPKERRARYVSDLGLSDYDASQLTANKVTSNFFEKAVALGGDAKQVSNWLQGEVAQFLNAEGKTLEQIELTPENLVEMITIIEDGTISSKIAKKVFVHLAKNGGGAREYVEKAGMVQISDPAILIPIIHQVFADNEAAVADFKSGKRNADKAFTGFLMRATKGQANPQVALKLLAQELAKLKEN.

This sequence belongs to the GatB/GatE family. GatB subfamily. Heterotrimer of A, B and C subunits.

The catalysed reaction is L-glutamyl-tRNA(Gln) + L-glutamine + ATP + H2O = L-glutaminyl-tRNA(Gln) + L-glutamate + ADP + phosphate + H(+). It catalyses the reaction L-aspartyl-tRNA(Asn) + L-glutamine + ATP + H2O = L-asparaginyl-tRNA(Asn) + L-glutamate + ADP + phosphate + 2 H(+). Allows the formation of correctly charged Asn-tRNA(Asn) or Gln-tRNA(Gln) through the transamidation of misacylated Asp-tRNA(Asn) or Glu-tRNA(Gln) in organisms which lack either or both of asparaginyl-tRNA or glutaminyl-tRNA synthetases. The reaction takes place in the presence of glutamine and ATP through an activated phospho-Asp-tRNA(Asn) or phospho-Glu-tRNA(Gln). This chain is Aspartyl/glutamyl-tRNA(Asn/Gln) amidotransferase subunit B, found in Streptococcus pneumoniae (strain ATCC 700669 / Spain 23F-1).